A 410-amino-acid chain; its full sequence is Probable serine/threonine-protein kinase PBL8 (410 aa).

A compositionally biased stretch (basic and acidic residues) spans 1–10 (MGNCGTRDEA). Residues 1-45 (MGNCGTRDEAAVFTPQAQAQQLQKKHSRSVSDLSDPSTPRFRDDS) are disordered. Glycine 2 carries the N-myristoyl glycine lipid modification. Cysteine 4 carries S-palmitoyl cysteine lipidation. The residue at position 58 (threonine 58) is a Phosphothreonine. Positions 69-350 (FRPDYILGEG…DVVETLEPLQ (282 aa)) constitute a Protein kinase domain. Residues 75 to 83 (LGEGGFGTV) and lysine 104 each bind ATP. Tyrosine 149 bears the Phosphotyrosine mark. Aspartate 199 serves as the catalytic Proton acceptor. A phosphoserine mark is found at serine 203 and serine 233. 2 positions are modified to phosphothreonine: threonine 234 and threonine 239. Tyrosine 247 carries the post-translational modification Phosphotyrosine.

It belongs to the protein kinase superfamily. Ser/Thr protein kinase family. In terms of assembly, interacts with the Xanthomonas campestris effector XopAC/AvrAC.

Its subcellular location is the cell membrane. It catalyses the reaction L-seryl-[protein] + ATP = O-phospho-L-seryl-[protein] + ADP + H(+). The enzyme catalyses L-threonyl-[protein] + ATP = O-phospho-L-threonyl-[protein] + ADP + H(+). May be involved in plant defense signaling. This chain is Probable serine/threonine-protein kinase PBL8, found in Arabidopsis thaliana (Mouse-ear cress).